We begin with the raw amino-acid sequence, 188 residues long: dCTP deaminase (188 aa).

DCTP-binding positions include K111–R116, T135–E137, Q156, Y170, and Q180. Residue E137 is the Proton donor/acceptor of the active site.

It belongs to the dCTP deaminase family. As to quaternary structure, homotrimer.

The catalysed reaction is dCTP + H2O + H(+) = dUTP + NH4(+). The protein operates within pyrimidine metabolism; dUMP biosynthesis; dUMP from dCTP (dUTP route): step 1/2. Catalyzes the deamination of dCTP to dUTP. The chain is dCTP deaminase from Ralstonia pickettii (strain 12J).